The sequence spans 575 residues: Urease subunit alpha (575 aa).

The 438-residue stretch at 138-575 (GAVDCHVHLI…LPMAQRYFLF (438 aa)) folds into the Urease domain. Residues H143, H145, and K226 each coordinate Ni(2+). Residue K226 is modified to N6-carboxylysine. H228 provides a ligand contact to substrate. Ni(2+) contacts are provided by H255 and H281. H329 serves as the catalytic Proton donor. D369 contacts Ni(2+).

The protein belongs to the metallo-dependent hydrolases superfamily. Urease alpha subunit family. Heterotrimer of UreA (gamma), UreB (beta) and UreC (alpha) subunits. Three heterotrimers associate to form the active enzyme. Ni cation is required as a cofactor. Carboxylation allows a single lysine to coordinate two nickel ions.

It is found in the cytoplasm. The catalysed reaction is urea + 2 H2O + H(+) = hydrogencarbonate + 2 NH4(+). It functions in the pathway nitrogen metabolism; urea degradation; CO(2) and NH(3) from urea (urease route): step 1/1. The sequence is that of Urease subunit alpha from Frankia alni (strain DSM 45986 / CECT 9034 / ACN14a).